The primary structure comprises 771 residues: Kojibiose phosphorylase (771 aa).

Substrate is bound at residue 358 to 359; sequence WD. E498 acts as the Proton donor in catalysis. Substrate is bound at residue 611 to 612; that stretch reads KQ.

It belongs to the glycosyl hydrolase 65 family.

It catalyses the reaction kojibiose + phosphate = beta-D-glucose 1-phosphate + D-glucose. Catalyzes the reversible phosphorolysis of kojibiose into beta-D-glucose 1-phosphate (Glc1P) and D-glucose. This is Kojibiose phosphorylase (kojP) from Caldanaerobacter subterraneus subsp. tengcongensis (strain DSM 15242 / JCM 11007 / NBRC 100824 / MB4) (Thermoanaerobacter tengcongensis).